The primary structure comprises 290 residues: MVNHASMTAHLIDGKAIAASLRQQIAQRVVERRQQGLRTPGLAVILVGTDPASQVYVSHKRKDCEEVGFISQAFDLPSETTQQALTELIDRLNDDPAVDGILLQLPLPAHLDASLLLERIRPDKDVDGFHPYNIGRLAQRIPLLRPCTPKGIMTLLESTGQDLYGMNAVIVGASNIVGRPMAMELLLAGCTVTVCHRFTKDLAGHVGRADLVVVAAGKPGLVKGEWVKEGAIVIDVGINRQEDGKLVGDVVYETALPRAGWITPVPGGVGPMTRACLLENTLYAAEELHK.

NADP(+) contacts are provided by residues 172–174 and I238; that span reads GAS.

This sequence belongs to the tetrahydrofolate dehydrogenase/cyclohydrolase family. In terms of assembly, homodimer.

It catalyses the reaction (6R)-5,10-methylene-5,6,7,8-tetrahydrofolate + NADP(+) = (6R)-5,10-methenyltetrahydrofolate + NADPH. The enzyme catalyses (6R)-5,10-methenyltetrahydrofolate + H2O = (6R)-10-formyltetrahydrofolate + H(+). The protein operates within one-carbon metabolism; tetrahydrofolate interconversion. Functionally, catalyzes the oxidation of 5,10-methylenetetrahydrofolate to 5,10-methenyltetrahydrofolate and then the hydrolysis of 5,10-methenyltetrahydrofolate to 10-formyltetrahydrofolate. In Pseudomonas putida (strain GB-1), this protein is Bifunctional protein FolD 1.